The chain runs to 88 residues: Small ribosomal subunit protein uS15 (88 aa).

It belongs to the universal ribosomal protein uS15 family. In terms of assembly, part of the 30S ribosomal subunit. Forms a bridge to the 50S subunit in the 70S ribosome, contacting the 23S rRNA.

In terms of biological role, one of the primary rRNA binding proteins, it binds directly to 16S rRNA where it helps nucleate assembly of the platform of the 30S subunit by binding and bridging several RNA helices of the 16S rRNA. Forms an intersubunit bridge (bridge B4) with the 23S rRNA of the 50S subunit in the ribosome. The chain is Small ribosomal subunit protein uS15 from Mesoplasma florum (strain ATCC 33453 / NBRC 100688 / NCTC 11704 / L1) (Acholeplasma florum).